The sequence spans 567 residues: Hydrogenase-2 large chain (567 aa).

Residues Cys-61, Cys-64, Cys-546, and Cys-549 each coordinate Ni(2+). Residues Val-553–Leu-567 constitute a propeptide that is removed on maturation.

It belongs to the [NiFe]/[NiFeSe] hydrogenase large subunit family. Heterodimer of a large and a small subunit. Ni(2+) serves as cofactor.

It localises to the cell membrane. It catalyses the reaction H2 + A = AH2. In terms of biological role, this is one of three E.coli hydrogenases synthesized in response to different physiological conditions. HYD2 is involved in hydrogen uptake. This Escherichia coli O157:H7 protein is Hydrogenase-2 large chain (hybC).